Reading from the N-terminus, the 242-residue chain is 6-phosphogluconolactonase (242 aa).

It belongs to the glucosamine/galactosamine-6-phosphate isomerase family. 6-phosphogluconolactonase subfamily.

It carries out the reaction 6-phospho-D-glucono-1,5-lactone + H2O = 6-phospho-D-gluconate + H(+). It functions in the pathway carbohydrate degradation; pentose phosphate pathway; D-ribulose 5-phosphate from D-glucose 6-phosphate (oxidative stage): step 2/3. In terms of biological role, hydrolysis of 6-phosphogluconolactone to 6-phosphogluconate. The polypeptide is 6-phosphogluconolactonase (pgl) (Pseudomonas putida (Arthrobacter siderocapsulatus)).